Reading from the N-terminus, the 261-residue chain is Carbonic anhydrase 1 (261 aa).

Alanine 2 carries the N-acetylalanine modification. Residues serine 4 to phenylalanine 261 enclose the Alpha-carbonic anhydrase domain. Histidine 65 functions as the Proton donor/acceptor in the catalytic mechanism. Zn(2+)-binding residues include histidine 95, histidine 97, and histidine 120. Residues threonine 200 and threonine 200–histidine 201 each bind substrate.

The protein belongs to the alpha-carbonic anhydrase family. Zn(2+) is required as a cofactor.

It localises to the cytoplasm. It catalyses the reaction hydrogencarbonate + H(+) = CO2 + H2O. The catalysed reaction is urea = cyanamide + H2O. Inhibited by acetazolamide. Catalyzes the reversible hydration of carbon dioxide. Can hydrate cyanamide to urea. The protein is Carbonic anhydrase 1 (CA1) of Equus caballus (Horse).